The chain runs to 473 residues: Bifunctional protein HldE (473 aa).

The ribokinase stretch occupies residues 1–317 (MKLSMPRFDQ…RRAIQREEGS (317 aa)). 194–197 (NLSE) is an ATP binding site. Aspartate 263 is a catalytic residue. The segment at 343-473 (FTNGCFDILH…TAIVEKIRKN (131 aa)) is cytidylyltransferase.

In the N-terminal section; belongs to the carbohydrate kinase PfkB family. This sequence in the C-terminal section; belongs to the cytidylyltransferase family. In terms of assembly, homodimer.

The catalysed reaction is D-glycero-beta-D-manno-heptose 7-phosphate + ATP = D-glycero-beta-D-manno-heptose 1,7-bisphosphate + ADP + H(+). It carries out the reaction D-glycero-beta-D-manno-heptose 1-phosphate + ATP + H(+) = ADP-D-glycero-beta-D-manno-heptose + diphosphate. It participates in nucleotide-sugar biosynthesis; ADP-L-glycero-beta-D-manno-heptose biosynthesis; ADP-L-glycero-beta-D-manno-heptose from D-glycero-beta-D-manno-heptose 7-phosphate: step 1/4. It functions in the pathway nucleotide-sugar biosynthesis; ADP-L-glycero-beta-D-manno-heptose biosynthesis; ADP-L-glycero-beta-D-manno-heptose from D-glycero-beta-D-manno-heptose 7-phosphate: step 3/4. Functionally, catalyzes the phosphorylation of D-glycero-D-manno-heptose 7-phosphate at the C-1 position to selectively form D-glycero-beta-D-manno-heptose-1,7-bisphosphate. Catalyzes the ADP transfer from ATP to D-glycero-beta-D-manno-heptose 1-phosphate, yielding ADP-D-glycero-beta-D-manno-heptose. This Pseudomonas putida (strain W619) protein is Bifunctional protein HldE.